Consider the following 1320-residue polypeptide: MELDWRSTLSNQERSKYITELAQILADISQINGGARANFDLEKLKKTAEQFETSLYASSSSKELYLDAMRKRIAAMDAAKKKTLANQKQKAAAQRKGFGLAPTLNPQMFLNQQAQARQQARPMRGSVGGGQSPVMMMPQHGVPAHVAHGVPPGVAVSQAKRAQLSLQQQQQINEMKVAEIPRELLQRIPNIPPGVTTWQQVTELAQQKRLTQSDLQIAKQVYQMHQQMMVKSKMQQASLNQLTPQQRAQLQQRQQSTQQSQSAPPQAPQVAQSQQVPAQKPQQQQQQQQQQQQQQQQQQQQQQQQQQQQQQQQQQQQQQQQQQQQQQQQQQQQQQQQQQQQQQQQQQQQQQQQQQHAAAQAQLQHPNAYQQKNMMAQQSAAALQQGQQQPRQMGPQQAREVPNVLNKLNQVFSPAEQKALYENGKKLVQDLQLAGKLPASLTQQQQILYIKKYINQMVLKKLQQNIRLAQQIGAANSANTQSQMAAQAGARFTPGMAQHSQFAQQQHTGNQAQVQSQVSQSISQQQAQLTQKVQQAQQSQLQQTQEQDPQHTQLADSFSQRQFTSPTLAKPSANVSTIAQQQTQPTALSQSHPQQQQGSQAQQQLLQQQQGSQAQQQLLQQQQQQPPPPPPQPQQQTQQPQQPQQQQQPQPQPQLQQQQQLGLQPHQPQLAQAQAQQPQPQQQTQQQTQQQQQQQQQQQQQQTQQQTQHQPQPQLKPQSQQPQPVPQQVQSQQPQQVQSQQQPQPQQLSQPAQQQSQQQQQQQQQSQQQKLRQVQLPQQTPKITLPRPTEQDMMILKRINSEVAKSPLRLSNITNQLTPEQKQMIKNKLQANQQLLSNVDNFIPTLYLITRNEENVRQLLQIRMLAKEIMEHASKGVFIVPPDVVDKVIFRYQKYYEFIKEQLLRRHQQLFSTRQQQMQQQVVQQQQAGQIKLGQNAVGAPQNPQVTTNTDIAMQQQRVQGSFQQMQQQIRQQQVKQAQLQQAQQQAQQQQQAQQLQQGHMPVQQSMPLAGVQTVMATQAATLPQHASPVSSNTANIPKTGDAPVSIDSVTPVPPGIVNSSGPSPVAGKQILAATMVPQHKLSPTKSDFAQAPTADNPYQVDELRLKNLAIRKAEIMSRFKHRQEIFEHSPVDLFLCTLADCMGIKDGSYELLAPIPALMVEQINGTGKKKFTKAQQRVREQDSIECYVKDNKLMMSSKFSADERSYSIHDRDISSCFLDLYGLSDCTSLSFDSSSAEPPTEQVNKKRSHDSLEISPAESDSSLLNDSKKLKVDSPDDLFMTSNMMLDNKNAQPPIGLGLGVGLGEAGSSIWNWNYWESL.

Over residues 235–244 (QQASLNQLTP) the composition is skewed to polar residues. 5 disordered regions span residues 235–283 (QQAS…KPQQ), 372–398 (KNMMAQQSAAALQQGQQQPRQMGPQQA), 540–688 (QLQQ…QQQT), 702–791 (QTQQ…PTEQ), and 1233–1270 (DSSSAEPPTEQVNKKRSHDSLEISPAESDSSLLNDSKK). 3 stretches are compositionally biased toward low complexity: residues 245–283 (QQRAQLQQRQQSTQQSQSAPPQAPQVAQSQQVPAQKPQQ), 375–398 (MAQQSAAALQQGQQQPRQMGPQQA), and 540–554 (QLQQTQEQDPQHTQL). Residues 555 to 587 (ADSFSQRQFTSPTLAKPSANVSTIAQQQTQPTA) are compositionally biased toward polar residues. Low complexity-rich tracts occupy residues 588-624 (LSQSHPQQQQGSQAQQQLLQQQQGSQAQQQLLQQQQQ), 634-688 (QQQT…QQQT), and 702-780 (QTQQ…PQQT).

The protein belongs to the Mediator complex subunit 15 family. Component of the Mediator complex.

It is found in the nucleus. Its function is as follows. Component of the Mediator complex, a coactivator involved in regulated gene transcription of nearly all RNA polymerase II-dependent genes. Mediator functions as a bridge to convey information from gene-specific regulatory proteins to the basal RNA polymerase II transcription machinery. Mediator is recruited to promoters by direct interactions with regulatory proteins and serves as a scaffold for the assembly of a functional preinitiation complex with RNA polymerase II and the general transcription factors. The chain is Mediator of RNA polymerase II transcription subunit 15 (GAL11) from Eremothecium gossypii (strain ATCC 10895 / CBS 109.51 / FGSC 9923 / NRRL Y-1056) (Yeast).